Here is a 1849-residue protein sequence, read N- to C-terminus: Brefeldin A-inhibited guanine nucleotide-exchange protein 1 (1849 aa).

Positions 2-224 are DCB; DCB:DCB domain and DCB:HUS domain interaction; the sequence is YEGKKTKNMF…QEAKQMEKER (223 aa). Residues 46 to 58 show a composition bias toward basic and acidic residues; that stretch reads AETEKQSPPHGEA. Disordered regions lie at residues 46 to 65, 216 to 248, 267 to 302, and 378 to 413; these read AETE…SSTL, EAKQ…QLRY, LHTN…DQAT, and TPIS…SPGA. At S52 the chain carries Phosphoserine. The span at 267–277 shows a compositional bias: basic and acidic residues; sequence LHTNDVDKSLQ. Residues S286, S289, S290, S397, and S410 each carry the phosphoserine modification. Residues 394-409 show a composition bias toward polar residues; that stretch reads SVSSNDTQESGNSSGP. The tract at residues 557–577 is HUS; DCB:HUS domain interaction; that stretch reads ADAQSVVDIYVNYDCDLNAAN. Residues 709 to 840 form the SEC7 domain; it reads FNKKPKRGIQ…IIMLTTDLHS (132 aa). Residues 711–715 carry the Nuclear localization signal (NLS) motif; sequence KKPKR. A Phosphoserine modification is found at S1079. Residues 1543–1562 are disordered; that stretch reads RPNSGETAPPPPSPVSEKPL. S1566 and S1569 each carry phosphoserine.

Homodimer. Interacts with ARFGEF2/BIG2; both proteins are probably part of the same or very similar macromolecular complexes. Interacts with FKBP2. Interacts with MYO9B. Interacts with PRKAR1A and PRKAR2A. Interacts with PPP1CC. Interacts with NCL, FBL, NUP62 and U3 small nucleolar RNA. Interacts with DPY30. Interacts with PDE3A. Interacts with KANK1. Interacts with TBC1D22A and TBC1D22B. Interacts (via N-terminus) with ARL1. In terms of processing, phosphorylated. In vitro phosphorylated by PKA reducing its GEF activity and dephosphorylated by phosphatase PP1. As to expression, expressed in placenta, lung, heart, brain, kidney and pancreas.

The protein localises to the cytoplasm. It localises to the perinuclear region. Its subcellular location is the golgi apparatus. The protein resides in the trans-Golgi network membrane. It is found in the nucleus. The protein localises to the nucleolus. It localises to the nucleus matrix. Inhibited by brefeldin A. Functionally, promotes guanine-nucleotide exchange on ARF1 and ARF3. Promotes the activation of ARF1/ARF3 through replacement of GDP with GTP. Involved in vesicular trafficking. Required for the maintenance of Golgi structure; the function may be independent of its GEF activity. Required for the maturation of integrin beta-1 in the Golgi. Involved in the establishment and persistence of cell polarity during directed cell movement in wound healing. Proposed to act as A kinase-anchoring protein (AKAP) and may mediate crosstalk between Arf and PKA pathways. Inhibits GAP activity of MYO9B probably through competitive RhoA binding. The function in the nucleus remains to be determined. This is Brefeldin A-inhibited guanine nucleotide-exchange protein 1 (ARFGEF1) from Homo sapiens (Human).